The following is a 1117-amino-acid chain: WD repeat and HMG-box DNA-binding protein 1 (1117 aa).

WD repeat units follow at residues 11–50, 52–91, 93–131, 134–173, 184–223, 228–267, and 271–310; these read GHTEGHTEVCFDDSGSYIVTCGSDGDVRMWEDLDDDDPKS, NVGEKAFSCALKNGKLVTAVSNNTVQVYTFPEGVPDGILT, FTTNANHVVFNGAGNKIAAGSSDFLVKVVDVMDNSQQQT, GHDAPVLSLSFDPKDIFLASASCDGTVRVWNISDQTCAVS, VNAKSICRLAWQPKAGKLLAVPVEKSVKLYRRETWSNPFD, SISQTLNIVTWSPCGQYLAAGAINGLIVVWNVETKDCMER, and EKGYAICGLAWHPTCSRICYTDVEGNLGVLENVCDLSGKV. A phosphoserine mark is found at Ser-333 and Ser-377. Lys-390 participates in a covalent cross-link: Glycyl lysine isopeptide (Lys-Gly) (interchain with G-Cter in SUMO2). Lys-664 carries the N6-acetyllysine modification. The tract at residues 816–885 is disordered; that stretch reads LAETQSEEEK…NLFQSANSSD (70 aa). Thr-819 carries the phosphothreonine modification. Position 821 is a phosphoserine (Ser-821). A compositionally biased stretch (basic and acidic residues) spans 861–872; that stretch reads DTVSEEKPESHN. Over residues 873-885 the composition is skewed to polar residues; the sequence is HGQNLFQSANSSD. 2 positions are modified to phosphoserine: Ser-910 and Ser-923. Residues 911–1005 form a disordered region; that stretch reads SKEPAVSANS…AVCLQNSENQ (95 aa). Polar residues predominate over residues 917-943; sequence SANSTRSANILDSMNKSSRKSTSLNRM. Lys-953 is modified (N6-acetyllysine). Polar residues predominate over residues 962 to 974; it reads KQASAASYFQKRT. The segment covering 975 to 987 has biased composition (basic and acidic residues); sequence PQADKTEEVKENP. Polar residues predominate over residues 988-1004; it reads KSSSSDAPAVCLQNSEN. A DNA-binding region (HMG box) is located at residues 1004–1073; it reads NQRPKTGFQM…SDGAEAKKRK (70 aa). Ser-1030 bears the Phosphoserine mark. The tract at residues 1054 to 1074 is disordered; the sequence is WTNKAKGETASDGAEAKKRKR. Lys-1116 participates in a covalent cross-link: Glycyl lysine isopeptide (Lys-Gly) (interchain with G-Cter in SUMO1); alternate. A Glycyl lysine isopeptide (Lys-Gly) (interchain with G-Cter in SUMO2); alternate cross-link involves residue Lys-1116.

In terms of assembly, trimer. Interacts with the polymerase alpha catalytic subunit POLA1. Interacts with MCM10. Interacts with DNA2. Interacts with CDC45 and GINS2 subunit of GINS complex; these interactions associate WDHD1 with the CMG helicase complex.

It localises to the nucleus. Its subcellular location is the nucleoplasm. In terms of biological role, core replisome component that acts as a replication initiation factor. Binds directly to the CMG complex and functions as a hub to recruit additional proteins to the replication fork. In Mus musculus (Mouse), this protein is WD repeat and HMG-box DNA-binding protein 1 (Wdhd1).